Here is an 807-residue protein sequence, read N- to C-terminus: MKFSESWLREWVNPALSSDDLAHQITMAGLEVDGVDPVAGEFSGVVIGEVVECGPHPDADKLQVTKISLGDYSSTTVEKGELVTIVCGAKNCRLGLKVAVATVGAVLPGDFKIKKAKLRGVPSFGMLCSESEIGLADDSDGIMELASDAPLGQCVREYLDLNDVTIDVDLTANRGDCLGLKGLAREVGVLNSLEVSEPTITAVAPTIDDVITINIEANEACPRYLGRVIKGINPNATTPLWMVEKLRRCGTRSIDPVVDVTNYILLELGHPMHAFDLAKLDGGINVRFANKDEKLTLLDENEVTLKEGTLVIADENKALAMAGIFGGLESGVTNNTTDLFLESAFFAPLAILGKARQYGLHTDSSHRYERGIDPTLQHDAIERATELLLSIVGGQAGPVVEAKSDADIPQTKDVNLRRKMLDSRIGHHIEDAQVSEILTRLGFTVTTTGEGEAKVWQVIVPAYRFDIKIEVDLIEEVARIFGYNNIPNIAPKATLKMCEQKEANLSLSNLKQTLVNRDYQEAITYSFVDPKVQALLHPGQEVMTLPHPISSEMSVMRLSLWTGLLQSMVYNQNRQQGRIRLFETGLRFVPDESAENGVRQQNMIAGVISGLRVDEHWSMEKAATDFYDIKGDVEALLALTCDAQGYEFSKAEVDALHPGQTAQITKNGVFVGCVGTLHPELERKLGLNGRTLIFELLLSEVLVQKIPEATDISRFPANRRDLAIVVKEDVDAKNVLQLIEKVGGNYLIDLNLFDVYKGQGIDDGFKSLAIALVLQDTSKTLEEKDITDVIDRVVATLKTELNASLRD.

One can recognise a tRNA-binding domain in the interval 39-156 (AGEFSGVVIG…SDAPLGQCVR (118 aa)). The 80-residue stretch at 409-488 (PQTKDVNLRR…RIFGYNNIPN (80 aa)) folds into the B5 domain. Positions 466, 472, 475, and 476 each coordinate Mg(2+). The region spanning 713-806 (SRFPANRRDL…LKTELNASLR (94 aa)) is the FDX-ACB domain.

The protein belongs to the phenylalanyl-tRNA synthetase beta subunit family. Type 1 subfamily. As to quaternary structure, tetramer of two alpha and two beta subunits. Mg(2+) is required as a cofactor.

The protein resides in the cytoplasm. It carries out the reaction tRNA(Phe) + L-phenylalanine + ATP = L-phenylalanyl-tRNA(Phe) + AMP + diphosphate + H(+). The polypeptide is Phenylalanine--tRNA ligase beta subunit (Colwellia psychrerythraea (strain 34H / ATCC BAA-681) (Vibrio psychroerythus)).